Here is a 274-residue protein sequence, read N- to C-terminus: Halorhodopsin (274 aa).

A propeptide spanning residues 1 to 21 (MSITSVPGVVDAGVLGAQSAA) is cleaved from the precursor. The Extracellular segment spans residues 22 to 25 (AVRE). Residues 26-51 (NALLSSSLWVNVALAGIAILVFVYMG) form a helical membrane-spanning segment. Residues 52–57 (RTIRPG) are Cytoplasmic-facing. Residues 58-81 (RPRLIWGATLMIPLVSISSYLGLL) traverse the membrane as a helical segment. Over 82 to 105 (SGLTVGMIEMPAGHALAGEMVRSQ) the chain is Extracellular. Q105, T111, and S115 together coordinate chloride. Residues 106 to 127 (WGRYLTWALSTPMILLALGLLA) form a helical membrane-spanning segment. At 128–130 (DVD) the chain is on the cytoplasmic side. A helical transmembrane segment spans residues 131-154 (LGSLFTVIAADIGMCVTGLAAAMT). At 155 to 157 (TSA) the chain is on the extracellular side. The chain crosses the membrane as a helical span at residues 158–180 (LLFRWAFYAISCAFFVVVLSALV). Residues 181–192 (TDWAASASSAGT) are Cytoplasmic-facing. The chain crosses the membrane as a helical span at residues 193–216 (AEIFDTLRVLTVVLWLGYPIVWAV). The Extracellular segment spans residues 217–226 (GVEGLALVQS). The chain crosses the membrane as a helical span at residues 227–255 (VGVTSWAYSVLDVFAKYVFAFILLRWVAN). An N6-(retinylidene)lysine modification is found at K242. The Cytoplasmic portion of the chain corresponds to 256-274 (NERTVAVAGQTLGTMSSDD).

This sequence belongs to the archaeal/bacterial/fungal opsin family. In terms of assembly, homotrimer.

It localises to the cell membrane. In terms of biological role, light-driven chloride pump. The sequence is that of Halorhodopsin (hop) from Halobacterium salinarum (strain ATCC 29341 / DSM 671 / R1).